The sequence spans 1344 residues: Xanthine dehydrogenase (1344 aa).

A 2Fe-2S ferredoxin-type domain is found at 9–96 (SVLVFFVNGK…GCAVTTVEGI (88 aa)). 8 residues coordinate [2Fe-2S] cluster: C48, C53, C56, C78, C118, C121, C153, and C155. Residues 236–425 (FSSERVTWYR…LGIHFQKTTP (190 aa)) form the FAD-binding PCMH-type domain. Residues 264–271 (LVVGNTEV), F344, 354–358 (CLGGN), D367, L415, and K433 contribute to the FAD site. Positions 781 and 812 each coordinate Mo-molybdopterin. The substrate site is built by E816 and R894. Residue R926 participates in Mo-molybdopterin binding. Position 928 (F928) interacts with substrate. A1093 contributes to the Mo-molybdopterin binding site. E1276 functions as the Proton acceptor in the catalytic mechanism.

It belongs to the xanthine dehydrogenase family. As to quaternary structure, homodimer. The cofactor is FAD. Requires Mo-molybdopterin as cofactor. [2Fe-2S] cluster serves as cofactor.

Its subcellular location is the peroxisome. It catalyses the reaction xanthine + NAD(+) + H2O = urate + NADH + H(+). The enzyme catalyses hypoxanthine + NAD(+) + H2O = xanthine + NADH + H(+). Its function is as follows. Key enzyme in purine degradation. Catalyzes the oxidation of hypoxanthine to xanthine. Catalyzes the oxidation of xanthine to uric acid. The polypeptide is Xanthine dehydrogenase (Xdh) (Drosophila subobscura (Fruit fly)).